Here is a 29-residue protein sequence, read N- to C-terminus: Sarcolamban B (29 aa).

Residues 7 to 27 (LFTTFLILAFLLFLLYAFYEA) traverse the membrane as a helical segment.

As to quaternary structure, interacts with SERCA. As to expression, strongly expressed in embryonic and larval somatic muscles and postembryonic heart.

Its subcellular location is the sarcoplasmic reticulum membrane. Plays an essential role in the regulation of calcium transport at the sarcoplasmic reticulum (SR), which is secondarily required for regular muscle contraction. In Drosophila melanogaster (Fruit fly), this protein is Sarcolamban B.